Reading from the N-terminus, the 645-residue chain is Sodium-dependent nutrient amino acid transporter 1 (645 aa).

The disordered stretch occupies residues 1 to 48 (MELKTMPHNGANGSPQHNNNNNSNNNNNVSSDTKTDNNEKEAQKKDEG). The Cytoplasmic segment spans residues 1–51 (MELKTMPHNGANGSPQHNNNNNSNNNNNVSSDTKTDNNEKEAQKKDEGRTN). Over residues 18 to 32 (NNNNNSNNNNNVSSD) the composition is skewed to low complexity. The span at 33–48 (TKTDNNEKEAQKKDEG) shows a compositional bias: basic and acidic residues. 3 helical membrane passes run 52–72 (WSNGIEFLMSCISVSVGLGNV), 85–105 (GAFLIPYIIVLFLIGKPMYYL), and 138–158 (TICIITYYSSLLALTLYYLFV). Residues Asn-191 and Asn-205 are each glycosylated (N-linked (GlcNAc...) asparagine). Transmembrane regions (helical) follow at residues 234–254 (IPDWKLTIALFVSWVVIFLVI), 264–284 (AAYFLALFPYVVLFALLGRAV), 313–333 (AVVQCFFSLAVGCGPIIMFAS), 347–367 (IVTTLDTLTSLLGGITIFAIL), 407–427 (LFSVLFFFMLFVLGIGSIVAL), 454–474 (CGFLMGLVYVTPGGQWILTLV), and 480–500 (TYVVFILAIFELSGIVWIYGL). N-linked (GlcNAc...) asparagine glycosylation occurs at Asn-514. 2 consecutive transmembrane segments (helical) span residues 522-542 (CWSFFTPVMMIVIFIYSMATI) and 559-579 (AGWLLFAVGAAQFPLWGWWYI).

Belongs to the sodium:neurotransmitter symporter (SNF) (TC 2.A.22) family.

It localises to the membrane. Its function is as follows. Unusual broad substrate spectrum amino acid:sodium cotransporter that promotes absorption of the D isomers of essential amino acids. Neutral amino acids are the preferred substrates, especially methionine and phenylalanine. The polypeptide is Sodium-dependent nutrient amino acid transporter 1 (Drosophila mojavensis (Fruit fly)).